The sequence spans 419 residues: UDP-N-acetylglucosamine 1-carboxyvinyltransferase 2 (419 aa).

22–23 lines the phosphoenolpyruvate pocket; that stretch reads KN. Arg92 serves as a coordination point for UDP-N-acetyl-alpha-D-glucosamine. The active-site Proton donor is Cys116. Cys116 bears the 2-(S-cysteinyl)pyruvic acid O-phosphothioketal mark. UDP-N-acetyl-alpha-D-glucosamine is bound by residues 121 to 125, Asp306, and Ile328; that span reads RPIDL.

This sequence belongs to the EPSP synthase family. MurA subfamily.

Its subcellular location is the cytoplasm. It catalyses the reaction phosphoenolpyruvate + UDP-N-acetyl-alpha-D-glucosamine = UDP-N-acetyl-3-O-(1-carboxyvinyl)-alpha-D-glucosamine + phosphate. It participates in cell wall biogenesis; peptidoglycan biosynthesis. Functionally, cell wall formation. Adds enolpyruvyl to UDP-N-acetylglucosamine. The protein is UDP-N-acetylglucosamine 1-carboxyvinyltransferase 2 of Streptococcus pyogenes serotype M18 (strain MGAS8232).